The chain runs to 72 residues: Translation initiation factor IF-1 (72 aa).

The S1-like domain occupies 1–72 (MAKEETIQMQ…TRARITFRTK (72 aa)).

The protein belongs to the IF-1 family. Component of the 30S ribosomal translation pre-initiation complex which assembles on the 30S ribosome in the order IF-2 and IF-3, IF-1 and N-formylmethionyl-tRNA(fMet); mRNA recruitment can occur at any time during PIC assembly.

It is found in the cytoplasm. Functionally, one of the essential components for the initiation of protein synthesis. Stabilizes the binding of IF-2 and IF-3 on the 30S subunit to which N-formylmethionyl-tRNA(fMet) subsequently binds. Helps modulate mRNA selection, yielding the 30S pre-initiation complex (PIC). Upon addition of the 50S ribosomal subunit IF-1, IF-2 and IF-3 are released leaving the mature 70S translation initiation complex. The sequence is that of Translation initiation factor IF-1 from Nitrosomonas eutropha (strain DSM 101675 / C91 / Nm57).